Here is a 415-residue protein sequence, read N- to C-terminus: Putative serine/threonine-protein phosphatase 4 regulatory subunit 1-like (415 aa).

4 HEAT repeats span residues 86–124 (VMEIVVRLSEDAEPTVRTELMEQIPPIAIFLQENRSNFP), 163–202 (LLPRFCELCGDRKLFQVRKVCAANFGDICHAVGQEATEKF), 203–241 (LIPKFFELCSDAVWGMRKACAECFTAVSHSSSPGVRRTQ), and 242–280 (LFPLFIRLVSDPCRWVHQAAFQSLGPFTSTFANPSRAGL). The span at 301–318 (FASGSPAPSSGGNTSPAS) shows a compositional bias: low complexity. The interval 301–362 (FASGSPAPSS…GPAESPVESC (62 aa)) is disordered.

Functionally, may be a regulatory subunit of serine/threonine-protein phosphatase 4. The chain is Putative serine/threonine-protein phosphatase 4 regulatory subunit 1-like (PPP4R1L) from Homo sapiens (Human).